We begin with the raw amino-acid sequence, 240 residues long: RxLR effector protein PexRD20 (240 aa).

The signal sequence occupies residues Met-1–Ala-23. A RxLR-dEER motif is present at residues Arg-43–Arg-58.

The protein belongs to the RxLR effector family.

It is found in the secreted. It localises to the host cytoplasm. The protein localises to the host nucleus. The protein resides in the host nucleolus. Functionally, effector that enhances P.infestans colonization of Nicotiana benthamiana leaves. This is RxLR effector protein PexRD20 from Phytophthora infestans (strain T30-4) (Potato late blight agent).